The primary structure comprises 211 residues: Arginine exporter protein ArgO (211 aa).

Helical transmembrane passes span 1-21, 37-57, 68-88, 111-131, 147-167, and 179-199; these read MISY…PLGP, LMIA…GIFG, LLAL…FGAL, IIAT…DTFV, WFAL…ALLA, and AQRI…FQLA.

The protein belongs to the LysE/ArgO transporter (TC 2.A.75) family.

Its subcellular location is the cell inner membrane. The enzyme catalyses L-arginine(in) = L-arginine(out). Its function is as follows. Involved in the export of arginine. Important to control the intracellular level of arginine and the correct balance between arginine and lysine. The protein is Arginine exporter protein ArgO of Salmonella typhimurium (strain LT2 / SGSC1412 / ATCC 700720).